Here is a 479-residue protein sequence, read N- to C-terminus: Protein ORD (479 aa).

The disordered stretch occupies residues 102–140; the sequence is KEEETEPESESDLDEGPSTSKQALERMVQRAERKAKEAS. A compositionally biased stretch (acidic residues) spans 104–116; that stretch reads EETEPESESDLDE. The segment covering 124–140 has biased composition (basic and acidic residues); it reads ALERMVQRAERKAKEAS.

Interacts with Sce.

The protein localises to the nucleus. The protein resides in the chromosome. Its subcellular location is the centromere. In terms of biological role, essential for proper maintenance of sister-chromatid cohesion in both male and female meiosis. Mutations in ord cause premature separation of the sister chromatids in meiosis I and random segregation in both meiotic divisions. Required for chiasma maintenance in female meiosis. Mutations in ord reduce recombination in female meiosis. This is Protein ORD (ord) from Drosophila melanogaster (Fruit fly).